The chain runs to 150 residues: SsrA-binding protein (150 aa).

It belongs to the SmpB family.

It is found in the cytoplasm. Required for rescue of stalled ribosomes mediated by trans-translation. Binds to transfer-messenger RNA (tmRNA), required for stable association of tmRNA with ribosomes. tmRNA and SmpB together mimic tRNA shape, replacing the anticodon stem-loop with SmpB. tmRNA is encoded by the ssrA gene; the 2 termini fold to resemble tRNA(Ala) and it encodes a 'tag peptide', a short internal open reading frame. During trans-translation Ala-aminoacylated tmRNA acts like a tRNA, entering the A-site of stalled ribosomes, displacing the stalled mRNA. The ribosome then switches to translate the ORF on the tmRNA; the nascent peptide is terminated with the 'tag peptide' encoded by the tmRNA and targeted for degradation. The ribosome is freed to recommence translation, which seems to be the essential function of trans-translation. In Campylobacter jejuni subsp. jejuni serotype O:6 (strain 81116 / NCTC 11828), this protein is SsrA-binding protein.